We begin with the raw amino-acid sequence, 69 residues long: Disintegrin EMF10A (69 aa).

The Disintegrin domain occupies 1-66 (MNSANPCCDP…DCPRNPWKSE (66 aa)). Cystine bridges form between Cys7/Cys30, Cys21/Cys27, Cys26/Cys51, and Cys39/Cys58. The Cell attachment site motif lies at 43-45 (RGD).

This sequence belongs to the disintegrin family. Dimeric disintegrin subfamily. In terms of assembly, heterodimer with EMF10B; disulfide-linked. As to expression, expressed by the venom gland.

The protein localises to the secreted. In terms of biological role, extremely potent and selective inhibitor of integrin alpha-5/beta-1 (ITGA5/ITGB1). Partially inhibits adhesion of cells expressing alpha-IIb/beta-3 (ITGA2B/ITGB3), alpha-V/beta-3 (ITGAV/ITGB3), and alpha-4/beta-1 (ITGA4/ITGB1) to appropriate ligands only at concentration higher than 500 nM. Weakly inhibits ADP-induced platelet aggregation. The sequence is that of Disintegrin EMF10A from Eristicophis macmahoni (Leaf-nosed viper).